We begin with the raw amino-acid sequence, 109 residues long: Thioredoxin (109 aa).

A Thioredoxin domain is found at 2 to 107 (SISQVIDTSF…LLNTLQKHLK (106 aa)). Catalysis depends on nucleophile residues Cys31 and Cys34. Residues Cys31 and Cys34 are joined by a disulfide bond.

The protein belongs to the thioredoxin family.

The protein resides in the plastid. It localises to the chloroplast. Its function is as follows. Participates in various redox reactions through the reversible oxidation of its active center dithiol to a disulfide and catalyzes dithiol-disulfide exchange reactions. The sequence is that of Thioredoxin (trxA) from Griffithsia pacifica (Red alga).